A 337-amino-acid chain; its full sequence is D-alanine--D-alanine ligase (337 aa).

Residues 126–326 (KQIWISNGLS…YADLVLWLLS (201 aa)) enclose the ATP-grasp domain. 152 to 207 (VKHLGLPLIVKPAHEGSSLGLTKVKSVEELPAAYQLAAGLDKKVIAETCIVGDELT) is a binding site for ATP. 3 residues coordinate Mg(2+): aspartate 279, glutamate 293, and asparagine 295.

It belongs to the D-alanine--D-alanine ligase family. The cofactor is Mg(2+). Mn(2+) serves as cofactor.

It is found in the cytoplasm. The enzyme catalyses 2 D-alanine + ATP = D-alanyl-D-alanine + ADP + phosphate + H(+). It functions in the pathway cell wall biogenesis; peptidoglycan biosynthesis. Cell wall formation. This chain is D-alanine--D-alanine ligase, found in Polynucleobacter asymbioticus (strain DSM 18221 / CIP 109841 / QLW-P1DMWA-1) (Polynucleobacter necessarius subsp. asymbioticus).